The following is a 914-amino-acid chain: Solute carrier family 12 member 9 (914 aa).

At 1–36 (MASESSPLLAYRLLGEEGVALPANGAGGPGGASARK) the chain is on the cytoplasmic side. Serine 6 is modified (phosphoserine). A helical membrane pass occupies residues 37 to 57 (LSTFLGVVVPTVLSMFSIVVF). The Extracellular portion of the chain corresponds to 58 to 72 (LRIGFVVGHAGLLQA). A helical membrane pass occupies residues 73 to 93 (LAMLLVAYFILALTVLSVCAI). The Cytoplasmic portion of the chain corresponds to 94–119 (ATNGAVQGGGAYFMISRTLGPEVGGS). Residues 120–140 (IGLMFYLANVCGCAVSLLGLV) traverse the membrane as a helical segment. The Extracellular portion of the chain corresponds to 141–167 (ESVLDVFGADATGPSGLRVLPQGYGWN). Residues 168–188 (LLYGSLLLGLVGGVCTLGAGL) form a helical membrane-spanning segment. Residues 189–193 (YARAS) are Cytoplasmic-facing. Residues 194–214 (FLTFLLVSGSLASVLISFVAV) traverse the membrane as a helical segment. Topologically, residues 215–262 (GPRDIRLTPRPGPNGSSLPPRFGHFTGFNSSTLKDNLGAGYAEDYTTG) are extracellular. N-linked (GlcNAc...) asparagine glycosylation is found at asparagine 228 and asparagine 243. Residues 263 to 283 (AVMNFASVFAVLFNGCTGIMA) form a helical membrane-spanning segment. The Cytoplasmic portion of the chain corresponds to 284–297 (GANMSGELKDPSRA). Residues 298–318 (IPLGTIVAVAYTFFVYVLLFF) form a helical membrane-spanning segment. At 319-338 (LSSFTCDRTLLQEDYGFFRA) the chain is on the extracellular side. A helical transmembrane segment spans residues 339–359 (ISLWPPLVLIGIYATALSASM). At 360–390 (SSLIGASRILHALARDDLFGVILAPAKVVSR) the chain is on the cytoplasmic side. Residues 391-411 (GGNPWAAVLYSWGLVQLVLLA) form a helical membrane-spanning segment. Residues 412-416 (GKLNT) are Extracellular-facing. The helical transmembrane segment at 417–437 (LAAVVTVFYLVAYAAVDLSCL) threads the bilayer. Residues 438–466 (SLEWASAPNFRPTFSLFSWHTCLLGVASC) are Cytoplasmic-facing. The helical transmembrane segment at 467-487 (LLMMFLISPGAAGGSLLLMGL) threads the bilayer. Topologically, residues 488–740 (LAALLTARGG…LLRPRGGPGY (253 aa)) are extracellular. Residues 642 to 678 (LTDPAFSEPADSTREGSSPALSTLFPPPRAPGSPRAL) form a disordered region. The chain crosses the membrane as a helical span at residues 741 to 761 (VDVCGLFLLQMATILGMVPAW). Topologically, residues 762–914 (HSARLRIFLC…GVTPVTCTDL (153 aa)) are cytoplasmic. The segment at 844–863 (QQGRGTGGGPGGPEGGDAEG) is disordered. Gly residues predominate over residues 847 to 858 (RGTGGGPGGPEG).

Belongs to the SLC12A transporter family. Interacts with SLC12A1. Highly expressed in placenta, brain and kidney. Lower expression in lung, liver and heart.

The protein localises to the cell membrane. Its subcellular location is the lysosome membrane. Functionally, may be an inhibitor of SLC12A1. Seems to correspond to a subunit of a multimeric transport system and thus, additional subunits may be required for its function. May play a role in lysosomal ion flux and osmoregulation. The sequence is that of Solute carrier family 12 member 9 (SLC12A9) from Homo sapiens (Human).